The primary structure comprises 56 residues: Large ribosomal subunit protein bL33 (56 aa).

The protein belongs to the bacterial ribosomal protein bL33 family.

This is Large ribosomal subunit protein bL33 from Treponema denticola (strain ATCC 35405 / DSM 14222 / CIP 103919 / JCM 8153 / KCTC 15104).